A 112-amino-acid chain; its full sequence is Nitrogen regulatory protein P-II (112 aa).

O-UMP-tyrosine is present on Y51.

This sequence belongs to the P(II) protein family. As to quaternary structure, homotrimer. In terms of processing, uridylylated/deuridylylated by GlnD.

In terms of biological role, P-II indirectly controls the transcription of the glutamine synthetase gene (GlnA). P-II prevents NR-II-catalyzed conversion of NR-I to NR-I-phosphate, the transcriptional activator of GlnA. When P-II is uridylylated to P-II-UMP, these events are reversed. When the ratio of Gln to 2-ketoglutarate decreases, P-II is uridylylated to P-II-UMP, which causes the deadenylation of glutamine synthetase by GlnE, so activating the enzyme. This chain is Nitrogen regulatory protein P-II (glnB), found in Haemophilus influenzae (strain ATCC 51907 / DSM 11121 / KW20 / Rd).